A 113-amino-acid chain; its full sequence is U11-theraphotoxin-Hhn1n (113 aa).

The signal sequence occupies residues 1–21 (MNTVRVTFLLVFVLAVSLGQA). The propeptide occupies 22 to 74 (DKDENRMEMQEKTEQGKSYLDFAENLLLQKLEELEAKLLEEDSEESRNSRQKR). A compositionally biased stretch (basic and acidic residues) spans 60–69 (LEEDSEESRN). The disordered stretch occupies residues 60–83 (LEEDSEESRNSRQKRCIGEGVPCD). 2 cysteine pairs are disulfide-bonded: Cys-75–Cys-90 and Cys-89–Cys-110.

It belongs to the neurotoxin 14 (magi-1) family. 01 (HNTX-16) subfamily. In terms of tissue distribution, expressed by the venom gland.

Its subcellular location is the secreted. Probable ion channel inhibitor. The chain is U11-theraphotoxin-Hhn1n from Cyriopagopus hainanus (Chinese bird spider).